A 406-amino-acid chain; its full sequence is Imidazolonepropionase (406 aa).

2 residues coordinate Fe(3+): His-65 and His-67. The Zn(2+) site is built by His-65 and His-67. 3 residues coordinate 4-imidazolone-5-propanoate: Arg-74, Tyr-137, and His-170. An N-formimidoyl-L-glutamate-binding site is contributed by Tyr-137. Position 235 (His-235) interacts with Fe(3+). His-235 lines the Zn(2+) pocket. Gln-238 provides a ligand contact to 4-imidazolone-5-propanoate. Asp-310 provides a ligand contact to Fe(3+). Asp-310 provides a ligand contact to Zn(2+). Residues Asn-312 and Gly-314 each contribute to the N-formimidoyl-L-glutamate site. Residue Thr-315 participates in 4-imidazolone-5-propanoate binding.

Belongs to the metallo-dependent hydrolases superfamily. HutI family. Zn(2+) serves as cofactor. Fe(3+) is required as a cofactor.

The protein localises to the cytoplasm. The catalysed reaction is 4-imidazolone-5-propanoate + H2O = N-formimidoyl-L-glutamate. It participates in amino-acid degradation; L-histidine degradation into L-glutamate; N-formimidoyl-L-glutamate from L-histidine: step 3/3. Functionally, catalyzes the hydrolytic cleavage of the carbon-nitrogen bond in imidazolone-5-propanoate to yield N-formimidoyl-L-glutamate. It is the third step in the universal histidine degradation pathway. The chain is Imidazolonepropionase from Vibrio vulnificus (strain CMCP6).